We begin with the raw amino-acid sequence, 671 residues long: Alpha-1,4-glucan:maltose-1-phosphate maltosyltransferase (671 aa).

Alpha-maltose 1-phosphate-binding residues include Lys-252, Gln-312, and Asp-347. Asp-382 functions as the Nucleophile in the catalytic mechanism. Asn-383 is an alpha-maltose 1-phosphate binding site. Catalysis depends on Glu-411, which acts as the Proton donor. 521-522 (KY) lines the alpha-maltose 1-phosphate pocket.

Belongs to the glycosyl hydrolase 13 family. GlgE subfamily. Homodimer.

The catalysed reaction is alpha-maltose 1-phosphate + [(1-&gt;4)-alpha-D-glucosyl](n) = [(1-&gt;4)-alpha-D-glucosyl](n+2) + phosphate. Its function is as follows. Maltosyltransferase that uses maltose 1-phosphate (M1P) as the sugar donor to elongate linear or branched alpha-(1-&gt;4)-glucans. Is involved in a branched alpha-glucan biosynthetic pathway from trehalose, together with TreS, Mak and GlgB. The sequence is that of Alpha-1,4-glucan:maltose-1-phosphate maltosyltransferase from Corynebacterium pseudotuberculosis (strain 1002).